The following is a 286-amino-acid chain: Probable transport system permease protein NifC (286 aa).

The next 6 helical transmembrane spans lie at 34–54, 75–95, 114–134, 152–172, 216–236, and 257–277; these read LFLALTAIYFVMLIFPIISMI, IILSFVTSLIALIFTFIIGTP, IFVEIPVVLPPAVAGIALLLA, VIFTSTAVIIAQFFVSSALYV, GLILAWIRSLGEFGATLMFAG, and IKMATAFATILYIMTFVLLLL. Residues 75–278 enclose the ABC transmembrane type-1 domain; it reads IILSFVTSLI…IMTFVLLLLV (204 aa).

It belongs to the binding-protein-dependent transport system permease family. CysTW subfamily.

Its subcellular location is the cell membrane. Its function is as follows. May be involved in molybdenum transport. This is Probable transport system permease protein NifC (nifC) from Clostridium pasteurianum.